Reading from the N-terminus, the 247-residue chain is Small ribosomal subunit protein uS2 (247 aa).

This sequence belongs to the universal ribosomal protein uS2 family.

The protein is Small ribosomal subunit protein uS2 of Cupriavidus taiwanensis (strain DSM 17343 / BCRC 17206 / CCUG 44338 / CIP 107171 / LMG 19424 / R1) (Ralstonia taiwanensis (strain LMG 19424)).